A 118-amino-acid chain; its full sequence is Ly-6/neurotoxin-like protein 1 (118 aa).

The N-terminal stretch at 1–22 (MTPLLTLFLVVLMGLPLAPVQA) is a signal peptide. The 85-residue stretch at 23-107 (LDCHVCAYNG…LAIPATLALA (85 aa)) folds into the UPAR/Ly6 domain. 5 disulfides stabilise this stretch: Cys25-Cys48, Cys28-Cys35, Cys41-Cys66, Cys70-Cys87, and Cys88-Cys93. Ser95 carries GPI-anchor amidated serine lipidation. Residues 96 to 118 (AGLAIPATLALAPVLLATLWGLL) constitute a propeptide, removed in mature form.

In terms of assembly, interacts with nAChRs containing alpha-4:beta-2 (CHRNA4:CHRNB2) and alpha-7 (CHRNA7) subunits. Interacts with CHRNA4 probably in the endoplasmic reticulum prior to nAChR pentameric assembly. Interacts with KCNA2/Potassium voltage-gated channel subfamily A member 2. In terms of tissue distribution, expressed in lung predominantly in airway epithelial cells, submucous glands, and smooth muscle cells, in endothelial and smooth muscle cells in vessel walls and in alveolar type II cells (at protein level). Also expressed in brain.

It localises to the cell membrane. The protein localises to the cell projection. The protein resides in the dendrite. Its subcellular location is the endoplasmic reticulum. Acts in different tissues through interaction to nicotinic acetylcholine receptors (nAChRs). The proposed role as modulator of nAChR activity seems to be dependent on the nAChR subtype and stoichiometry, and to involve an effect on nAChR trafficking and its cell surface expression, and on single channel properties of the nAChR inserted in the plasma membrane. Modulates functional properties of nicotinic acetylcholine receptors (nAChRs) to prevent excessive excitation, and hence neurodegeneration. Enhances desensitization by increasing both the rate and extent of desensitization of alpha-4:beta-2-containing nAChRs and slowing recovery from desensitization. Promotes large amplitude ACh-evoked currents through alpha-4:beta-2 nAChRs. Is involved in regulation of the nAChR pentameric assembly in the endoplasmic reticulum. Shifts stoichiometry from high sensitivity alpha-4(2):beta-2(3) to low sensitivity alpha-4(3):beta-2(2) nAChR. In vitro modulates alpha-3:beta-4-containing nAChRs. Reduces cell surface expression of (alpha-3:beta-4)(2):beta-4 and (alpha-3:beta-4)(2):alpha-5 nAChRs suggesting an interaction with nAChR alpha-3(-):(+)beta-4 subunit interfaces and an allosteric mode. Corresponding single channel effects characterized by decreased unitary conductance, altered burst proportions and enhanced desensitization/inactivation seem to depend on nAChR alpha:alpha subunit interfaces and are greater in (alpha-3:beta-2)(2):alpha-3 when compared to (alpha-3:beta-2)(2):alpha-5 nAChRs. Prevents plasticity in the primary visual cortex late in life. In Macaca mulatta (Rhesus macaque), this protein is Ly-6/neurotoxin-like protein 1.